Reading from the N-terminus, the 764-residue chain is Phosphoribosylformylglycinamidine synthase subunit PurL (764 aa).

His-57 is an active-site residue. Positions 60 and 104 each coordinate ATP. Glu-106 is a Mg(2+) binding site. Substrate contacts are provided by residues 107-110 and Arg-129; that span reads SHNH. His-108 serves as the catalytic Proton acceptor. Asp-130 serves as a coordination point for Mg(2+). Gln-258 serves as a coordination point for substrate. Mg(2+) is bound at residue Asp-286. 330–332 lines the substrate pocket; it reads ESQ. 2 residues coordinate ATP: Asn-518 and Gly-555. Position 556 (Asn-556) interacts with Mg(2+). Substrate is bound at residue Ser-558.

Belongs to the FGAMS family. As to quaternary structure, monomer. Part of the FGAM synthase complex composed of 1 PurL, 1 PurQ and 2 PurS subunits.

The protein localises to the cytoplasm. The enzyme catalyses N(2)-formyl-N(1)-(5-phospho-beta-D-ribosyl)glycinamide + L-glutamine + ATP + H2O = 2-formamido-N(1)-(5-O-phospho-beta-D-ribosyl)acetamidine + L-glutamate + ADP + phosphate + H(+). It participates in purine metabolism; IMP biosynthesis via de novo pathway; 5-amino-1-(5-phospho-D-ribosyl)imidazole from N(2)-formyl-N(1)-(5-phospho-D-ribosyl)glycinamide: step 1/2. In terms of biological role, part of the phosphoribosylformylglycinamidine synthase complex involved in the purines biosynthetic pathway. Catalyzes the ATP-dependent conversion of formylglycinamide ribonucleotide (FGAR) and glutamine to yield formylglycinamidine ribonucleotide (FGAM) and glutamate. The FGAM synthase complex is composed of three subunits. PurQ produces an ammonia molecule by converting glutamine to glutamate. PurL transfers the ammonia molecule to FGAR to form FGAM in an ATP-dependent manner. PurS interacts with PurQ and PurL and is thought to assist in the transfer of the ammonia molecule from PurQ to PurL. The chain is Phosphoribosylformylglycinamidine synthase subunit PurL from Nocardia farcinica (strain IFM 10152).